We begin with the raw amino-acid sequence, 98 residues long: Large ribosomal subunit protein bL27 (98 aa).

The disordered stretch occupies residues 1–22; the sequence is MAHKKGTGSTRNGRDSNAQRLG. Polar residues predominate over residues 7-19; the sequence is TGSTRNGRDSNAQ.

This sequence belongs to the bacterial ribosomal protein bL27 family.

In Nostoc punctiforme (strain ATCC 29133 / PCC 73102), this protein is Large ribosomal subunit protein bL27.